Consider the following 205-residue polypeptide: High frequency lysogenization protein HflD homolog (205 aa).

Belongs to the HflD family.

The protein resides in the cytoplasm. It is found in the cell inner membrane. The chain is High frequency lysogenization protein HflD homolog from Shewanella sp. (strain ANA-3).